The chain runs to 141 residues: UPF0102 protein BRADO0179 (141 aa).

The segment at 1 to 24 (MAETDRATDKPAGAPKPAKTASPE) is disordered. A compositionally biased stretch (low complexity) spans 10-19 (KPAGAPKPAK).

The protein belongs to the UPF0102 family.

In Bradyrhizobium sp. (strain ORS 278), this protein is UPF0102 protein BRADO0179.